An 887-amino-acid chain; its full sequence is Lon protease homolog 2, peroxisomal (887 aa).

The Lon N-terminal domain maps to 11–256 (LGILAFRNKV…KATELVDRHL (246 aa)). The segment at 72-101 (YPGGGTDSGERNVKSQPGLSDSRKADGKSQ) is disordered. ATP is bound at residue 409–416 (GPPGVGKT). The Lon proteolytic domain occupies 693-878 (VSNPGVSVGL…EVLEQAFEGG (186 aa)). Residues serine 784 and lysine 827 contribute to the active site. The Microbody targeting signal signature appears at 885-887 (ARL).

It belongs to the peptidase S16 family.

Its subcellular location is the peroxisome matrix. It carries out the reaction Hydrolysis of proteins in presence of ATP.. Its function is as follows. ATP-dependent serine protease that mediates the selective degradation of misfolded and unassembled polypeptides in the peroxisomal matrix. Necessary for type 2 peroxisome targeting signal (PTS2)-containing protein processing and facilitates peroxisome matrix protein import. The polypeptide is Lon protease homolog 2, peroxisomal (Spinacia oleracea (Spinach)).